The primary structure comprises 164 residues: Histone H1 (164 aa).

Polar residues predominate over residues 1 to 10 (MAPRSSTSKS). Residues 1 to 164 (MAPRSSTSKS…KKSSKPAKKN (164 aa)) are disordered. Basic residues predominate over residues 16-27 (KDHKKAPIKKAI). Threonine 47 and threonine 54 each carry phosphothreonine. Composition is skewed to basic and acidic residues over residues 49–61 (VKKD…ADTK), 69–89 (TMKE…GDKK), and 117–156 (TKKE…DAKK).

In terms of processing, cell-growth/division-associated phosphorylation by a CDC2-like kinase.

It is found in the nucleus. The protein resides in the chromosome. In terms of biological role, histones H1 are necessary for the condensation of nucleosome chains into higher-order structures. This Tetrahymena thermophila (strain SB210) protein is Histone H1 (HHO).